We begin with the raw amino-acid sequence, 651 residues long: MEALNQILIEYPPLVVGGVGATAVAAGGALIYRIATRKKPTHLQVNCWFCNQDTVVPYGNRNCWDCPYCEQYNGFQENGDYNKPIPAQYMEHLNHGVSAGVPETPKTLQWVNCQMLLCKKCNNNQTLKIKQLASFIPREDENYDEEIEVYKHHLEQTYKLCRPCQTAVEYYIKHQNRQLRALLFNHQLRRTRDADKAFIKNTYSLSTPAWLILLRILTFLACAFLVAVALSGYVDESPSVTQTLSGGVVPPKRVLQNENESKTDEGSLMWDDLMGLLPEKAVENARLFWQSGSDHQMAVASVGLLTCITGVLMAGPVRLRRIDAVASVLWLLVICFYLAECYLKTDVPSWLEMVKFGITSVCCLVGFAAAVATRKSTSQRRARGRRYLSGGSPGEFFCNHGPLLSAPVSESSTFIPTPPPNLSQLLIRQQSQRTRKASPSSLPGRLNRALSLGTIPSLARADSGFLFSGSRPSSQCKDSPPSDYYSLKSGSRPSSPGPSPTPSVAGSVTSTSSSARQRRPLISPARLNISGQKLRLFSSPLEPFSLASPPPFLSEHNPMHSRGFLPDVPHFHLQNHGSVIDEGSVFEHLEKPMGSSSSSSNCHVDTTTGNNIESKPGWKGFLGMTLWPGLLFASLTINLSFICIYVYYNWR.

Topologically, residues M1–A209 are nuclear. The N-linked (GlcNAc...) asparagine glycan is linked to N124. The chain crosses the membrane as a helical span at residues W210–L230. The Perinuclear space segment spans residues S231 to Q296. A glycan (N-linked (GlcNAc...) asparagine) is linked at N259. The chain crosses the membrane as a helical span at residues M297–V317. The Nuclear portion of the chain corresponds to R318–R321. A helical membrane pass occupies residues I322–Y342. Residues L343 to E352 lie on the Perinuclear space side of the membrane. The helical transmembrane segment at M353 to T373 threads the bilayer. The Nuclear portion of the chain corresponds to R374–T625. N421 carries an N-linked (GlcNAc...) asparagine glycan. The tract at residues G469–A525 is disordered. A compositionally biased stretch (low complexity) spans P502–A515. N-linked (GlcNAc...) asparagine glycosylation occurs at N528. The chain crosses the membrane as a helical span at residues L626–V646. The Perinuclear space segment spans residues Y647–R651.

This sequence belongs to the TMEM201 family.

The protein resides in the nucleus inner membrane. In terms of biological role, critical regulator of angiogenesis and endothelial cell (EC) migration. Promotes the migration of endothelial cells, which is essential for angiogenesis. May be involved in actin-dependent nuclear movement. May be involved in the organization of the nuclear envelope. May recruit Ran GTPase to the nuclear periphery. The chain is Transmembrane protein 201 (tmem201) from Danio rerio (Zebrafish).